Reading from the N-terminus, the 407-residue chain is MTQLISVNSRSYRLSSAPTIVICVDGCEQEYINQAIQAGQAPFLAELTGFGTVLTGDCVVPSFTNPNNLSIVTGAPPSVHGICGNFFFDQETQEEVLMNDAKYLRAPTILAEMAKAGQLVAVVTAKDKLRNLLGHQLKGICFSAEKADQVNLEEHGVENILARVGMPVPSVYSADLSEFVFAAGLSLLTNERPDFMYLSTTDYVQHKHAPGTPEANAFYAMMDSYFKRYHEQGAIVAITADHGMNAKTDAIGRPNILFLQDLLDAQYGAQRTRVLLPITDPYVVHHGALGSYATVYLRDAVPQRDAIDFLAGIAGVEAVLTRSQACQRFELPEDRIGDLVVLGERLTVLGSAADKHDLSGLTVPLRSHGGVSEQKVPLIFNRKLVGLDSPGRLRNFDIIDLALNHLA.

Residues Asp25, Thr64, Asp202, His206, Asp241, His242, and His368 each contribute to the Zn(2+) site. Substrate is bound by residues Thr64 and Asp202. 2 residues coordinate substrate: His242 and His368.

Belongs to the alkaline phosphatase family. PhnA subfamily. In terms of assembly, homodimer. It depends on Zn(2+) as a cofactor.

The catalysed reaction is phosphonoacetate + H2O = acetate + phosphate + H(+). With respect to regulation, completely inhibited by EDTA and 1,10-phenanthroline. Moderately inhibited by the phosphonocarboxylic acids phosphonoformate and 3-phosphonopropionate and the phosphonate herbicide glyphosate. Partially inhibited by the reducing agents sodium sulfide and dithiotheitol and the chelating agent iminodiacetate. Nonphosphonate analogs of phosphonoacetate, such as arsonoacetate, sulfonoacetate and malonate are poor inhibitors. Inorganic phosphate, acetate and the known phosphonotase inhibitor phosphite have little effect on activity. Not inhibited by the alkylphosphonic acids methylphosphonate and ethylphosphonate, or the aminoalkylphosphonates 2-aminoethylphosphonate, 3-aminopropylphosphonate and 4-aminobutylphosphonate. Fe(3+), Ca(2+), Mg(2+) and Cs(+) have no effect on activity. Activity is slightly increased by the aminoalkylphosphonates 1-aminoethylphosphonate, 1-aminobutylphosphonate, 2-amino-4-butylphosphonate. Activity is increased by Zn(2+), Mn(2+) and Co(2+), these 3 metal ions also allow recovery of activity after EDTA treatment. In terms of biological role, specifically hydrolyzes phosphonoacetate. Does not have activity on other organophosphonates or acetates. This chain is Phosphonoacetate hydrolase, found in Pseudomonas fluorescens.